The primary structure comprises 102 residues: Small ribosomal subunit protein bS6 (102 aa).

It belongs to the bacterial ribosomal protein bS6 family.

Its function is as follows. Binds together with bS18 to 16S ribosomal RNA. In Deinococcus radiodurans (strain ATCC 13939 / DSM 20539 / JCM 16871 / CCUG 27074 / LMG 4051 / NBRC 15346 / NCIMB 9279 / VKM B-1422 / R1), this protein is Small ribosomal subunit protein bS6 (rpsF).